The chain runs to 519 residues: MKLCFFLLIFIRSFLLFKIKLVRTSEKKWRMGSRSHGDVKHPKSLPSLPVIGSLLHLGKKLPPHILFCNLQKKYGSLYSFMMGSHYVVVVNNHEDAREVLLKKGKTFGGRPRTVTTDILTRDGKDIAFADYSPTWKFHRKMVHSALCMFGEGTVAIEQIISREAASLCQTLTSFQRIPLDMAPELIRAVTNVVCSLCFNTRYKRGDAEFETMLKYSKGIVDTVAKDSLVDIFPWLQIFPNKDLDILRQSVAARDQLLQKKINEHKDAFCGETVKDLVDALLKAKLNMENNNSNVSQDVGLTEDHILMTVGDIFGAGVETTSTVLKWAVAYLLHYPEVQKKIQEELDVKVGFGRYPLLSDRKILHYTEAAISEVLRIRPVSPLLIPHVALKESSIGEYTIPKEARVVINLWSLHHDEKEWVNPHLFSPDRFLDENGNRVYSPSPSFLPFGAGIRVCLGEALAKMEVFLFLSWILQRFTLEVPEGDPLPDLEGKFGVVIQVKPFKVIAKLREVWKNIEIVT.

Cys-455 contacts heme.

It belongs to the cytochrome P450 family. The cofactor is heme.

It is found in the membrane. It catalyses the reaction a C21-steroid + reduced [NADPH--hemoprotein reductase] + O2 = a 17alpha-hydroxy-C21-steroid + oxidized [NADPH--hemoprotein reductase] + H2O + H(+). The enzyme catalyses 17alpha-hydroxyprogesterone + reduced [NADPH--hemoprotein reductase] + O2 = androst-4-ene-3,17-dione + acetate + oxidized [NADPH--hemoprotein reductase] + H2O + 2 H(+). It carries out the reaction 17alpha-hydroxypregnenolone + reduced [NADPH--hemoprotein reductase] + O2 = 3beta-hydroxyandrost-5-en-17-one + acetate + oxidized [NADPH--hemoprotein reductase] + H2O + 2 H(+). It functions in the pathway lipid metabolism; steroid biosynthesis. Functionally, conversion of pregnenolone and progesterone to their 17-alpha-hydroxylated products and subsequently to dehydroepiandrosterone (DHEA) and androstenedione. Catalyzes both the 17-alpha-hydroxylation and the 17,20-lyase reaction. In Rana dybowskii (Dybovsky's frog), this protein is Steroid 17-alpha-hydroxylase/17,20 lyase (CYP17A1).